A 487-amino-acid chain; its full sequence is Glutamyl-tRNA(Gln) amidotransferase subunit A (487 aa).

Residues lysine 74 and serine 149 each act as charge relay system in the active site. The active-site Acyl-ester intermediate is serine 173.

It belongs to the amidase family. GatA subfamily. Heterotrimer of A, B and C subunits.

It carries out the reaction L-glutamyl-tRNA(Gln) + L-glutamine + ATP + H2O = L-glutaminyl-tRNA(Gln) + L-glutamate + ADP + phosphate + H(+). Allows the formation of correctly charged Gln-tRNA(Gln) through the transamidation of misacylated Glu-tRNA(Gln) in organisms which lack glutaminyl-tRNA synthetase. The reaction takes place in the presence of glutamine and ATP through an activated gamma-phospho-Glu-tRNA(Gln). This Synechococcus sp. (strain WH7803) protein is Glutamyl-tRNA(Gln) amidotransferase subunit A.